Reading from the N-terminus, the 207-residue chain is Large ribosomal subunit protein uL4 (207 aa).

The disordered stretch occupies residues 48-70; the sequence is KAQKTRSEVSGGGAKPWRQKGTG.

This sequence belongs to the universal ribosomal protein uL4 family. As to quaternary structure, part of the 50S ribosomal subunit.

Functionally, one of the primary rRNA binding proteins, this protein initially binds near the 5'-end of the 23S rRNA. It is important during the early stages of 50S assembly. It makes multiple contacts with different domains of the 23S rRNA in the assembled 50S subunit and ribosome. Forms part of the polypeptide exit tunnel. The sequence is that of Large ribosomal subunit protein uL4 from Francisella philomiragia subsp. philomiragia (strain ATCC 25017 / CCUG 19701 / FSC 153 / O#319-036).